A 161-amino-acid chain; its full sequence is Putative ecotin-like protein (161 aa).

The N-terminal stretch at 1-24 is a signal peptide; sequence MSLRPIETAIASLTMLMLQGCAHA.

The protein belongs to the protease inhibitor I11 (ecotin) family.

The polypeptide is Putative ecotin-like protein (Methylobacillus flagellatus (strain ATCC 51484 / DSM 6875 / VKM B-1610 / KT)).